The chain runs to 212 residues: Ribosomal RNA small subunit methyltransferase G (212 aa).

Residues Gly80, Leu85, 131-132 (AE), and Arg146 each bind S-adenosyl-L-methionine.

Belongs to the methyltransferase superfamily. RNA methyltransferase RsmG family.

It is found in the cytoplasm. It catalyses the reaction guanosine(527) in 16S rRNA + S-adenosyl-L-methionine = N(7)-methylguanosine(527) in 16S rRNA + S-adenosyl-L-homocysteine. Its function is as follows. Specifically methylates the N7 position of guanine in position 527 of 16S rRNA. In Xanthomonas euvesicatoria pv. vesicatoria (strain 85-10) (Xanthomonas campestris pv. vesicatoria), this protein is Ribosomal RNA small subunit methyltransferase G.